The following is a 290-amino-acid chain: Bifunctional protein FolD 1 (290 aa).

NADP(+) contacts are provided by residues 164–166 (GRS), isoleucine 193, and isoleucine 236.

It belongs to the tetrahydrofolate dehydrogenase/cyclohydrolase family. As to quaternary structure, homodimer.

It carries out the reaction (6R)-5,10-methylene-5,6,7,8-tetrahydrofolate + NADP(+) = (6R)-5,10-methenyltetrahydrofolate + NADPH. The enzyme catalyses (6R)-5,10-methenyltetrahydrofolate + H2O = (6R)-10-formyltetrahydrofolate + H(+). It participates in one-carbon metabolism; tetrahydrofolate interconversion. Catalyzes the oxidation of 5,10-methylenetetrahydrofolate to 5,10-methenyltetrahydrofolate and then the hydrolysis of 5,10-methenyltetrahydrofolate to 10-formyltetrahydrofolate. The sequence is that of Bifunctional protein FolD 1 from Geobacter metallireducens (strain ATCC 53774 / DSM 7210 / GS-15).